A 392-amino-acid chain; its full sequence is Proteasomal ATPase-associated factor 1 (392 aa).

Position 2 is an N-acetylalanine (Ala2). WD repeat units follow at residues 82–121 (APYT…IWQA), 125–163 (ELRR…IWSA), 167–205 (SCVV…LWDC), 209–259 (ACLG…LARE), 270–308 (SRQL…QLDV), 313–349 (APVQ…IVQQ), and 353–389 (YVTE…RYQL).

The protein belongs to the WD repeat PAAF1/RPN14 family. As to quaternary structure, interacts with PSMC1, PSMC2, PSMC3, PSMC4, PSMC5 and PSMC6. Interacts with SUPT6H. (Microbial infection) Interacts with HIV-1 Tat. As to expression, ubiquitously expressed, with highest levels in kidney, brain and testis.

Functionally, inhibits proteasome 26S assembly and proteolytic activity by impairing the association of the 19S regulatory complex with the 20S core. In case of HIV-1 infection, recruited by viral Tat to the HIV-1 promoter, where it promotes the recruitment of 19S regulatory complex through dissociation of the proteasome 26S. This presumably promotes provirus transcription efficiency. Protects SUPT6H from proteasomal degradation. This Homo sapiens (Human) protein is Proteasomal ATPase-associated factor 1 (PAAF1).